Here is a 987-residue protein sequence, read N- to C-terminus: Voltage-gated delayed rectifier potassium channel KCNH1 (987 aa).

Residues 1–220 lie on the Cytoplasmic side of the membrane; it reads MTMAGGRKGL…LHYCVFKTTW (220 aa). In terms of domain architecture, PAS spans 14–94; the sequence is QNTFLENIVR…QTFENYEMNS (81 aa). The PAC domain maps to 93–145; the sequence is NSFEILMYKKNRTPVWFFVKIAPIRNEQDKVVLFLCTFSDITAFKQPIEDDSC. The tract at residues 151–162 is required for phosphatidylinositol bisphosphate binding; that stretch reads FARLTRALTSSR. A helical transmembrane segment spans residues 221-241; that stretch reads DWIILILTFYTAILVPYNVSF. The Extracellular segment spans residues 242–248; the sequence is KTRQNNV. A helical membrane pass occupies residues 249-269; that stretch reads AWLVVDSIVDVIFLVDIVLNF. Residues 270-290 lie on the Cytoplasmic side of the membrane; the sequence is HTTFVGPAGEVISDPKLIRMN. Residues 291-309 form a helical membrane-spanning segment; sequence YLKTWFVIDLLSCLPYDVI. The Extracellular segment spans residues 310–345; the sequence is NAFENVDEVSAFMGDPGKIGFADQIPPPLEGRESQG. Residues 346 to 368 traverse the membrane as a helical; Voltage-sensor segment; the sequence is ISSLFSSLKVVRLLRLGRVARKL. The Cytoplasmic portion of the chain corresponds to 369 to 377; that stretch reads DHYIEYGAA. A helical transmembrane segment spans residues 378–399; that stretch reads VLVLLVCVFGLAAHWMACIWYS. At 400–448 the chain is on the extracellular side; that stretch reads IGDYEIFDEDTKTIRNNSWLYQLAMDIGTPYQFNGSGSGKWEGGPSKNS. N-linked (GlcNAc...) asparagine glycans are attached at residues Asn415 and Asn433. Positions 449–470 form an intramembrane region, pore-forming; it reads VYISSLYFTMTSLTSVGFGNIA. Positions 463–468 match the Selectivity filter motif; that stretch reads SVGFGN. Residues 471–477 are Extracellular-facing; it reads PSTDIEK. The helical transmembrane segment at 478-498 threads the bilayer; that stretch reads IFAVAIMMIGSLLYATIFGNV. Residues 499–987 are Cytoplasmic-facing; the sequence is TTIFQQMYAN…ESERDIFGAS (489 aa). The segment at 673 to 770 is calmodulin-binding; it reads KRDALQKVLE…LDDLDVEKGS (98 aa). The segment at 699–701 is interaction with cyclic nucleotide-binding pocket; the sequence is YNL. The interval 922 to 962 is CAD (involved in subunit assembly); it reads AAVLEVKHELKEDIKALSTKMTSIEKQLSEILRILTSRRSS. Residues 960-987 form a disordered region; the sequence is RSSQSPQELFEISRPQSPESERDIFGAS. A phosphoserine mark is found at Ser972, Ser976, and Ser979. Basic and acidic residues predominate over residues 978 to 987; that stretch reads ESERDIFGAS.

This sequence belongs to the potassium channel family. H (Eag) (TC 1.A.1.20) subfamily. Kv10.1/KCNH1 sub-subfamily. Homomultimer. The potassium channel is composed of a homo- or heterotetrameric complex of pore-forming alpha subunits that can associate with modulating beta subunits. Heteromultimer with KCNH5/EAG2. Interacts with ALG10B. Interacts with RABEP1. Interacts (via C-terminus) with CTTN. Interacts (via C-terminal cytoplasmic region) with Ca(2+)-bound calmodulin. Post-translationally, channel activity is regulated via tyrosine phosphorylation/dephosphorylation by SRC and PTPN6. Detected in cerebellum, cortex and retina.

The protein localises to the cell membrane. It localises to the nucleus inner membrane. It is found in the cell projection. Its subcellular location is the dendrite. The protein resides in the axon. The protein localises to the presynaptic cell membrane. It localises to the perikaryon. It is found in the postsynaptic density membrane. Its subcellular location is the early endosome membrane. The enzyme catalyses K(+)(in) = K(+)(out). With respect to regulation, channel activity is inhibited by interaction with Ca(2+)-bound calmodulin. Interaction of a single pore-forming alpha subunit with a calmodulin chain is sufficient to promote channel closure. Extracellular magnesium ion concentrations up to 4 mM modulate channel activity by slowing down current activation in a reversible fashion. Channel activity is not regulated by cyclic nucleotides. Channel activity is inhibited by binding intracellular phosphatidylinositol-3,5-bisphosphate and phosphatidylinositol-4,5-bisphosphate (PIP2), but is not inhibited by phosphatidylinositol 4-phosphate. Its function is as follows. Pore-forming (alpha) subunit of a voltage-gated delayed rectifier potassium channel that mediates outward-rectifying potassium currents which, on depolarization, reaches a steady-state level and do not inactivate. The activation kinetics depend on the prepulse potential and external divalent cation concentration. With negative prepulses, the current activation is delayed and slowed down several fold, whereas more positive prepulses speed up activation. The time course of activation is biphasic with a fast and a slowly activating current component. Activates at more positive membrane potentials and exhibit a steeper activation curve. Channel properties are modulated by subunit assembly. Mediates IK(NI) current in myoblasts. Involved in the regulation of cell proliferation and differentiation, in particular adipogenic and osteogenic differentiation in bone marrow-derived mesenchymal stem cells (MSCs). The chain is Voltage-gated delayed rectifier potassium channel KCNH1 from Bos taurus (Bovine).